The chain runs to 352 residues: Holliday junction branch migration complex subunit RuvB (352 aa).

A large ATPase domain (RuvB-L) region spans residues 13 to 201; the sequence is LPLRKKELRL…FGISQKIEFY (189 aa). ATP is bound by residues arginine 41, glycine 82, lysine 85, threonine 86, threonine 87, 148-150, arginine 191, tyrosine 201, and arginine 238; that span reads EDF. Residue threonine 86 coordinates Mg(2+). A small ATPAse domain (RuvB-S) region spans residues 202 to 273; it reads NYDELKQILL…LIKKALNSYQ (72 aa). The segment at 276 to 352 is head domain (RuvB-H); the sequence is DKGLDSLDRH…KYIDSKNDDF (77 aa). Positions 330 and 335 each coordinate DNA.

This sequence belongs to the RuvB family. Homohexamer. Forms an RuvA(8)-RuvB(12)-Holliday junction (HJ) complex. HJ DNA is sandwiched between 2 RuvA tetramers; dsDNA enters through RuvA and exits via RuvB. An RuvB hexamer assembles on each DNA strand where it exits the tetramer. Each RuvB hexamer is contacted by two RuvA subunits (via domain III) on 2 adjacent RuvB subunits; this complex drives branch migration. In the full resolvosome a probable DNA-RuvA(4)-RuvB(12)-RuvC(2) complex forms which resolves the HJ.

Its subcellular location is the cytoplasm. The enzyme catalyses ATP + H2O = ADP + phosphate + H(+). Its function is as follows. The RuvA-RuvB-RuvC complex processes Holliday junction (HJ) DNA during genetic recombination and DNA repair, while the RuvA-RuvB complex plays an important role in the rescue of blocked DNA replication forks via replication fork reversal (RFR). RuvA specifically binds to HJ cruciform DNA, conferring on it an open structure. The RuvB hexamer acts as an ATP-dependent pump, pulling dsDNA into and through the RuvAB complex. RuvB forms 2 homohexamers on either side of HJ DNA bound by 1 or 2 RuvA tetramers; 4 subunits per hexamer contact DNA at a time. Coordinated motions by a converter formed by DNA-disengaged RuvB subunits stimulates ATP hydrolysis and nucleotide exchange. Immobilization of the converter enables RuvB to convert the ATP-contained energy into a lever motion, pulling 2 nucleotides of DNA out of the RuvA tetramer per ATP hydrolyzed, thus driving DNA branch migration. The RuvB motors rotate together with the DNA substrate, which together with the progressing nucleotide cycle form the mechanistic basis for DNA recombination by continuous HJ branch migration. Branch migration allows RuvC to scan DNA until it finds its consensus sequence, where it cleaves and resolves cruciform DNA. The polypeptide is Holliday junction branch migration complex subunit RuvB (Prochlorococcus marinus (strain MIT 9301)).